The chain runs to 93 residues: RNA-binding protein Hfq (93 aa).

The 60-residue stretch at 9 to 68 (DPFLNALRKERIPVSIFLVNGIKLQGQIESFDQYVVLLKNAVSQMVYKHAISTVVPARNP) folds into the Sm domain. The span at 74 to 86 (PAMAAGATAAPAA) shows a compositional bias: low complexity. The disordered stretch occupies residues 74-93 (PAMAAGATAAPAADEGYGNQ).

It belongs to the Hfq family. In terms of assembly, homohexamer.

RNA chaperone that binds small regulatory RNA (sRNAs) and mRNAs to facilitate mRNA translational regulation in response to envelope stress, environmental stress and changes in metabolite concentrations. Also binds with high specificity to tRNAs. The sequence is that of RNA-binding protein Hfq from Alcanivorax borkumensis (strain ATCC 700651 / DSM 11573 / NCIMB 13689 / SK2).